The following is a 272-amino-acid chain: HMP-PP phosphatase (272 aa).

Aspartate 8 serves as the catalytic Nucleophile. Positions 8, 10, and 212 each coordinate Mg(2+).

Belongs to the HAD-like hydrolase superfamily. Cof family. Mg(2+) serves as cofactor.

The enzyme catalyses 4-amino-2-methyl-5-(diphosphooxymethyl)pyrimidine + H2O = 4-amino-2-methyl-5-(phosphooxymethyl)pyrimidine + phosphate + H(+). Functionally, catalyzes the hydrolysis of 4-amino-2-methyl-5-hydroxymethylpyrimidine pyrophosphate (HMP-PP) to 4-amino-2-methyl-5-hydroxymethylpyrimidine phosphate (HMP-P). This is HMP-PP phosphatase from Escherichia coli (strain UTI89 / UPEC).